The following is a 274-amino-acid chain: Diaminopimelate epimerase (274 aa).

Substrate contacts are provided by Asn-11, Gln-44, and Asn-64. Residue Cys-73 is the Proton donor of the active site. Substrate is bound by residues 74–75 (GN), Asn-157, Asn-190, and 208–209 (ER). Cys-217 acts as the Proton acceptor in catalysis. 218-219 (GS) is a substrate binding site.

It belongs to the diaminopimelate epimerase family. In terms of assembly, homodimer.

It localises to the cytoplasm. The catalysed reaction is (2S,6S)-2,6-diaminopimelate = meso-2,6-diaminopimelate. The protein operates within amino-acid biosynthesis; L-lysine biosynthesis via DAP pathway; DL-2,6-diaminopimelate from LL-2,6-diaminopimelate: step 1/1. Functionally, catalyzes the stereoinversion of LL-2,6-diaminopimelate (L,L-DAP) to meso-diaminopimelate (meso-DAP), a precursor of L-lysine and an essential component of the bacterial peptidoglycan. The sequence is that of Diaminopimelate epimerase from Pasteurella multocida (strain Pm70).